The following is a 277-amino-acid chain: Large ribosomal subunit protein uL2 (277 aa).

A disordered region spans residues 227-277 (VMNPVDHPHGGGEGRTSGGRHPVTPWGVPTKGKKTRSKTKASDRLIMRRRK). Positions 266-277 (KASDRLIMRRRK) are enriched in basic and acidic residues.

Belongs to the universal ribosomal protein uL2 family. As to quaternary structure, part of the 50S ribosomal subunit. Forms a bridge to the 30S subunit in the 70S ribosome.

In terms of biological role, one of the primary rRNA binding proteins. Required for association of the 30S and 50S subunits to form the 70S ribosome, for tRNA binding and peptide bond formation. It has been suggested to have peptidyltransferase activity; this is somewhat controversial. Makes several contacts with the 16S rRNA in the 70S ribosome. This chain is Large ribosomal subunit protein uL2, found in Magnetococcus marinus (strain ATCC BAA-1437 / JCM 17883 / MC-1).